A 304-amino-acid polypeptide reads, in one-letter code: Acetyl-coenzyme A carboxylase carboxyl transferase subunit beta (304 aa).

A CoA carboxyltransferase N-terminal domain is found at 23–292 (VWTKCDSCGQ…PNPEAPREGV (270 aa)). The Zn(2+) site is built by cysteine 27, cysteine 30, cysteine 46, and cysteine 49. The C4-type zinc finger occupies 27 to 49 (CDSCGQVLYRAELERNLEVCPKC). Residues 284 to 304 (NPEAPREGVVVPPVPDQEPEA) are disordered. Positions 295–304 (PPVPDQEPEA) are enriched in pro residues.

The protein belongs to the AccD/PCCB family. In terms of assembly, acetyl-CoA carboxylase is a heterohexamer composed of biotin carboxyl carrier protein (AccB), biotin carboxylase (AccC) and two subunits each of ACCase subunit alpha (AccA) and ACCase subunit beta (AccD). It depends on Zn(2+) as a cofactor.

Its subcellular location is the cytoplasm. It catalyses the reaction N(6)-carboxybiotinyl-L-lysyl-[protein] + acetyl-CoA = N(6)-biotinyl-L-lysyl-[protein] + malonyl-CoA. The protein operates within lipid metabolism; malonyl-CoA biosynthesis; malonyl-CoA from acetyl-CoA: step 1/1. Functionally, component of the acetyl coenzyme A carboxylase (ACC) complex. Biotin carboxylase (BC) catalyzes the carboxylation of biotin on its carrier protein (BCCP) and then the CO(2) group is transferred by the transcarboxylase to acetyl-CoA to form malonyl-CoA. In Shigella flexneri serotype 5b (strain 8401), this protein is Acetyl-coenzyme A carboxylase carboxyl transferase subunit beta.